A 387-amino-acid polypeptide reads, in one-letter code: Formate-dependent phosphoribosylglycinamide formyltransferase (387 aa).

Residues 12 to 13 and Glu-72 contribute to the N(1)-(5-phospho-beta-D-ribosyl)glycinamide site; that span reads EL. Residues Arg-104, Lys-145, 150–155, 185–188, and Glu-193 each bind ATP; these read SSGKGQ and EEFI. One can recognise an ATP-grasp domain in the interval 109 to 300; it reads DLAAKDLKLL…EFELHIRAIL (192 aa). 2 residues coordinate Mg(2+): Glu-258 and Glu-270. N(1)-(5-phospho-beta-D-ribosyl)glycinamide contacts are provided by residues Asp-277, Lys-348, and 355–356; that span reads RR.

This sequence belongs to the PurK/PurT family. In terms of assembly, homodimer.

It carries out the reaction N(1)-(5-phospho-beta-D-ribosyl)glycinamide + formate + ATP = N(2)-formyl-N(1)-(5-phospho-beta-D-ribosyl)glycinamide + ADP + phosphate + H(+). The protein operates within purine metabolism; IMP biosynthesis via de novo pathway; N(2)-formyl-N(1)-(5-phospho-D-ribosyl)glycinamide from N(1)-(5-phospho-D-ribosyl)glycinamide (formate route): step 1/1. Functionally, involved in the de novo purine biosynthesis. Catalyzes the transfer of formate to 5-phospho-ribosyl-glycinamide (GAR), producing 5-phospho-ribosyl-N-formylglycinamide (FGAR). Formate is provided by PurU via hydrolysis of 10-formyl-tetrahydrofolate. This is Formate-dependent phosphoribosylglycinamide formyltransferase from Leptospira borgpetersenii serovar Hardjo-bovis (strain JB197).